A 126-amino-acid polypeptide reads, in one-letter code: Large ribosomal subunit protein bL19 (126 aa).

This sequence belongs to the bacterial ribosomal protein bL19 family.

In terms of biological role, this protein is located at the 30S-50S ribosomal subunit interface and may play a role in the structure and function of the aminoacyl-tRNA binding site. The chain is Large ribosomal subunit protein bL19 from Bordetella bronchiseptica (strain ATCC BAA-588 / NCTC 13252 / RB50) (Alcaligenes bronchisepticus).